We begin with the raw amino-acid sequence, 474 residues long: tRNA-2-methylthio-N(6)-dimethylallyladenosine synthase (474 aa).

The MTTase N-terminal domain maps to 3–120 (KKLHIKTWGC…LPEMLNHVQG (118 aa)). Cys12, Cys49, Cys83, Cys157, Cys161, and Cys164 together coordinate [4Fe-4S] cluster. The 233-residue stretch at 143-375 (RAEGPTAFVS…QDRINQQVLQ (233 aa)) folds into the Radical SAM core domain. The TRAM domain occupies 378-441 (RRMLGTVQRI…TNSLRGTVVR (64 aa)).

This sequence belongs to the methylthiotransferase family. MiaB subfamily. In terms of assembly, monomer. It depends on [4Fe-4S] cluster as a cofactor.

It is found in the cytoplasm. It catalyses the reaction N(6)-dimethylallyladenosine(37) in tRNA + (sulfur carrier)-SH + AH2 + 2 S-adenosyl-L-methionine = 2-methylsulfanyl-N(6)-dimethylallyladenosine(37) in tRNA + (sulfur carrier)-H + 5'-deoxyadenosine + L-methionine + A + S-adenosyl-L-homocysteine + 2 H(+). In terms of biological role, catalyzes the methylthiolation of N6-(dimethylallyl)adenosine (i(6)A), leading to the formation of 2-methylthio-N6-(dimethylallyl)adenosine (ms(2)i(6)A) at position 37 in tRNAs that read codons beginning with uridine. This Serratia proteamaculans (strain 568) protein is tRNA-2-methylthio-N(6)-dimethylallyladenosine synthase.